Consider the following 688-residue polypeptide: UvrABC system protein C (688 aa).

One can recognise a GIY-YIG domain in the interval leucine 11–isoleucine 90. Residues glycine 200 to threonine 235 form the UVR domain.

The protein belongs to the UvrC family. In terms of assembly, interacts with UvrB in an incision complex.

It is found in the cytoplasm. In terms of biological role, the UvrABC repair system catalyzes the recognition and processing of DNA lesions. UvrC both incises the 5' and 3' sides of the lesion. The N-terminal half is responsible for the 3' incision and the C-terminal half is responsible for the 5' incision. This is UvrABC system protein C from Nitratidesulfovibrio vulgaris (strain ATCC 29579 / DSM 644 / CCUG 34227 / NCIMB 8303 / VKM B-1760 / Hildenborough) (Desulfovibrio vulgaris).